We begin with the raw amino-acid sequence, 408 residues long: LL-diaminopimelate aminotransferase (408 aa).

Substrate is bound by residues Tyr-15 and Gly-42. Residues Tyr-72, 108 to 109 (SK), Tyr-132, Asn-187, Tyr-218, and 246 to 248 (SFS) contribute to the pyridoxal 5'-phosphate site. Substrate-binding residues include Lys-109, Tyr-132, and Asn-187. Residue Lys-249 is modified to N6-(pyridoxal phosphate)lysine. 2 residues coordinate pyridoxal 5'-phosphate: Arg-257 and Asn-292. 2 residues coordinate substrate: Asn-292 and Arg-388.

It belongs to the class-I pyridoxal-phosphate-dependent aminotransferase family. LL-diaminopimelate aminotransferase subfamily. Homodimer. The cofactor is pyridoxal 5'-phosphate.

It carries out the reaction (2S,6S)-2,6-diaminopimelate + 2-oxoglutarate = (S)-2,3,4,5-tetrahydrodipicolinate + L-glutamate + H2O + H(+). Its pathway is amino-acid biosynthesis; L-lysine biosynthesis via DAP pathway; LL-2,6-diaminopimelate from (S)-tetrahydrodipicolinate (aminotransferase route): step 1/1. Its function is as follows. Involved in the synthesis of meso-diaminopimelate (m-DAP or DL-DAP), required for both lysine and peptidoglycan biosynthesis. Catalyzes the direct conversion of tetrahydrodipicolinate to LL-diaminopimelate. The polypeptide is LL-diaminopimelate aminotransferase (Prochlorococcus marinus (strain MIT 9312)).